The sequence spans 31 residues: Cyclotide vibi-F (31 aa).

A cross-link (cyclopeptide (Gly-Asn)) is located at residues 1–31 (GTIPCGESCVFIPCLTSALGCSCKSKVCYKN). Disulfide bonds link Cys-5/Cys-21, Cys-9/Cys-23, and Cys-14/Cys-28.

This is a cyclic peptide.

Its function is as follows. Probably participates in a plant defense mechanism. The protein is Cyclotide vibi-F of Viola biflora (Yellow wood violet).